The following is a 124-amino-acid chain: Histone H2B (124 aa).

Residues Met1–Lys33 form a disordered region. Lys6 and Lys11 each carry N6-acetyllysine. A compositionally biased stretch (basic residues) spans Ala8–Val17. The residue at position 13 (Ser13) is a Phosphoserine. Residues Lys14 and Lys19 each carry the N6-acetyllysine modification. O-linked (GlcNAc) serine glycosylation occurs at Ser111. Lys119 is covalently cross-linked (Glycyl lysine isopeptide (Lys-Gly) (interchain with G-Cter in ubiquitin)).

The protein belongs to the histone H2B family. As to quaternary structure, the nucleosome is a histone octamer containing two molecules each of H2A, H2B, H3 and H4 assembled in one H3-H4 heterotetramer and two H2A-H2B heterodimers. The octamer wraps approximately 147 bp of DNA. Monoubiquitination of Lys-119 by BRE1 gives a specific tag for epigenetic transcriptional activation and is also prerequisite for histone H3 'Lys-4' and 'Lys-79' methylation. In terms of processing, phosphorylated during apoptosis; which facilitates apoptotic chromatin condensation. Post-translationally, glcNAcylation at Ser-111 promotes monoubiquitination of Lys-119. It fluctuates in response to extracellular glucose, and associates with transcribed genes.

Its subcellular location is the nucleus. It localises to the chromosome. Functionally, core component of nucleosome. Nucleosomes wrap and compact DNA into chromatin, limiting DNA accessibility to the cellular machineries which require DNA as a template. Histones thereby play a central role in transcription regulation, DNA repair, DNA replication and chromosomal stability. DNA accessibility is regulated via a complex set of post-translational modifications of histones, also called histone code, and nucleosome remodeling. This chain is Histone H2B, found in Oncorhynchus mykiss (Rainbow trout).